The chain runs to 647 residues: UvrABC system protein C (647 aa).

Residues 16–95 (VEPGVYRFRD…IKEFDPRFNV (80 aa)) enclose the GIY-YIG domain. In terms of domain architecture, UVR spans 208 to 243 (DRFARELEQQMNAAAAELDFERAARLRDDLGALKRA).

This sequence belongs to the UvrC family. Interacts with UvrB in an incision complex.

The protein localises to the cytoplasm. In terms of biological role, the UvrABC repair system catalyzes the recognition and processing of DNA lesions. UvrC both incises the 5' and 3' sides of the lesion. The N-terminal half is responsible for the 3' incision and the C-terminal half is responsible for the 5' incision. In Mycolicibacterium paratuberculosis (strain ATCC BAA-968 / K-10) (Mycobacterium paratuberculosis), this protein is UvrABC system protein C.